Reading from the N-terminus, the 585-residue chain is Auxin response factor 17 (585 aa).

A DNA-binding region (TF-B3) is located at residues 119–221 (FAKILTPSDA…EMFIGVRRTP (103 aa)). 2 disordered regions span residues 483–517 (EMMN…RGPL) and 535–585 (EHSE…SSQG). Positions 488-510 (GSPPSDNLSPNSNTTNLSSGNDL) are enriched in low complexity. Residues 573–585 (KHSNSNAGSSSQG) are compositionally biased toward polar residues.

This sequence belongs to the ARF family. As to quaternary structure, homo and heterodimers.

It is found in the nucleus. Its function is as follows. Auxin response factors (ARFs) are transcriptional factors that bind specifically to the DNA sequence 5'-TGTCTC-3' found in the auxin-responsive promoter elements (AuxREs). Could act as transcriptional activator or repressor. Formation of heterodimers with Aux/IAA proteins may alter their ability to modulate early auxin response genes expression. The protein is Auxin response factor 17 (ARF17) of Arabidopsis thaliana (Mouse-ear cress).